Here is a 269-residue protein sequence, read N- to C-terminus: Uncharacterised methyltransferase MT1546 (269 aa).

The protein belongs to the methyltransferase superfamily.

This is Uncharacterised methyltransferase MT1546 from Mycobacterium tuberculosis (strain CDC 1551 / Oshkosh).